The chain runs to 406 residues: Peptide chain release factor PrfB3, chloroplastic (406 aa).

This sequence belongs to the prokaryotic/mitochondrial release factor family. In terms of assembly, interacts with PDE338.

The protein resides in the plastid. It localises to the chloroplast stroma. The protein localises to the chloroplast. Its function is as follows. Involved in the light- and stress-dependent regulation of stability of 3' processed petB transcripts, thus regulating cytochrome b6 accumulation, a rate-limiting step in photosynthetic electron transport. May be recruited to specifically protect petB transcripts against 3'-5' exonucleolytic attack by masking the 3' ends. Does not function as release factor. This chain is Peptide chain release factor PrfB3, chloroplastic, found in Arabidopsis thaliana (Mouse-ear cress).